The sequence spans 304 residues: Acetyl-coenzyme A carboxylase carboxyl transferase subunit beta (304 aa).

The CoA carboxyltransferase N-terminal domain maps to 23 to 292; that stretch reads VWTKCDSCGQ…PNPEAPREGV (270 aa). Residues C27, C30, C46, and C49 each coordinate Zn(2+). The C4-type zinc finger occupies 27–49; sequence CDSCGQVLYRAELERNLEVCPKC. The disordered stretch occupies residues 284-304; it reads NPEAPREGVVVPPVPDQEPEA. Over residues 295–304 the composition is skewed to pro residues; sequence PPVPDQEPEA.

Belongs to the AccD/PCCB family. Acetyl-CoA carboxylase is a heterohexamer composed of biotin carboxyl carrier protein (AccB), biotin carboxylase (AccC) and two subunits each of ACCase subunit alpha (AccA) and ACCase subunit beta (AccD). The cofactor is Zn(2+).

It localises to the cytoplasm. It carries out the reaction N(6)-carboxybiotinyl-L-lysyl-[protein] + acetyl-CoA = N(6)-biotinyl-L-lysyl-[protein] + malonyl-CoA. It functions in the pathway lipid metabolism; malonyl-CoA biosynthesis; malonyl-CoA from acetyl-CoA: step 1/1. Its function is as follows. Component of the acetyl coenzyme A carboxylase (ACC) complex. Biotin carboxylase (BC) catalyzes the carboxylation of biotin on its carrier protein (BCCP) and then the CO(2) group is transferred by the transcarboxylase to acetyl-CoA to form malonyl-CoA. The chain is Acetyl-coenzyme A carboxylase carboxyl transferase subunit beta from Escherichia coli O6:K15:H31 (strain 536 / UPEC).